We begin with the raw amino-acid sequence, 652 residues long: Nucleolar GTP-binding protein 1 (652 aa).

An OBG-type G domain is found at 169–341 (RTIIICGFPN…VKTEACERLL (173 aa)). GTP-binding positions include 175–182 (GFPNVGKS), 221–225 (DTPGI), and 289–292 (NKID). The segment at 501–521 (RLSSRKNKPVIPRNKQPKVRD) is disordered.

This sequence belongs to the TRAFAC class OBG-HflX-like GTPase superfamily. OBG GTPase family. NOG subfamily.

Its subcellular location is the nucleus. It localises to the nucleolus. Its function is as follows. Involved in the biogenesis of the 60S ribosomal subunit. Required for normal assembly of the mitotic spindle. May be involved in both centrosome-dependent and centrosome-independent spindle assembly programs. Acts as a TP53 repressor, preventing TP53 stabilization and cell cycle arrest. This Drosophila melanogaster (Fruit fly) protein is Nucleolar GTP-binding protein 1.